The sequence spans 881 residues: Dynamin-like GTPase MGM1, mitochondrial (881 aa).

A mitochondrion-targeting transit peptide spans 1 to 59 (MNASPVRLLILRRQLATHPAILYSSPYIKSPLVHLHSRMSNVHRSAHANALSFVITRRS). The Mitochondrial matrix segment spans residues 60–72 (ISHFPKIISKIIR). Residues 73–92 (LPIYVGGGMAAAGSYIAYKM) traverse the membrane as a helical; Signal-anchor for type II membrane protein segment. Residues 93–881 (EEASSFTKDK…KSYKGVSKNL (789 aa)) lie on the Mitochondrial intermembrane side of the membrane. A disordered region spans residues 145 to 183 (ATSLDDDESKRQGDPKDDDDEDDDDEDDENDSVDTTQDE). Residues 160–176 (KDDDDEDDDDEDDENDS) show a composition bias toward acidic residues. One can recognise a Dynamin-type G domain in the interval 207–505 (HLTLPSIVVI…LEISMSNALE (299 aa)). Residues 217 to 224 (GSQSSGKS) are G1 motif. GTP-binding residues include serine 220, serine 221, glycine 222, lysine 223, serine 224, serine 225, and glycine 239. Mg(2+) is bound at residue serine 224. Positions 243 to 245 (VTR) are G2 motif. The Mg(2+) site is built by threonine 244 and aspartate 317. Residues 317–320 (DLPG) are G3 motif. Residues 385 to 388 (TKLD) are G4 motif. Lysine 386, aspartate 388, and threonine 415 together coordinate GTP. Positions 414–417 (ITKT) are G5 motif. A paddle region region spans residues 668–780 (STADQVENCI…KMLKNKCHST (113 aa)). A disulfide bridge connects residues cysteine 777 and cysteine 786. One can recognise a GED domain in the interval 780-872 (TIEKDRCPEV…KIDSILVFKK (93 aa)).

The protein belongs to the TRAFAC class dynamin-like GTPase superfamily. Dynamin/Fzo/YdjA family. As to quaternary structure, oligomeric complex consisting of membrane-bound and soluble forms of MGM1. Associates with FZO1 through interaction with the intermembrane space domain of UGO1 which binds FZO1 through its cytoplasmic domain. In terms of processing, cleavage of the transit peptide by mitochondrial processing protease (MPP) produces a long integral membrane form of MGM1 (l-MGM1). Further processing by the rhomboid protease PCP1 produces a short peripheral membrane form of MGM1 (s-MGM1). Both isoforms are required for full activity.

The protein localises to the mitochondrion inner membrane. It localises to the mitochondrion intermembrane space. It catalyses the reaction GTP + H2O = GDP + phosphate + H(+). Its function is as follows. Dynamin-related GTPase that is essential for normal mitochondrial morphology by mediating fusion of the mitochondrial inner membranes, regulating cristae morphology and maintaining respiratory chain function. Exists in two forms: the transmembrane, long form (Dynamin-like GTPase MGM1, long form; L-MGM1), which is tethered to the inner mitochondrial membrane, and the short soluble form (Dynamin-like GTPase MGM1, short form; S-MGM1), which results from proteolytic cleavage and localizes in the intermembrane space. Both forms (L-MGM1 and S-MGM1) cooperate to catalyze the fusion of the mitochondrial inner membrane. The equilibrium between L-MGM1 and S-MGM1 is essential: excess levels of S-MGM1, following loss of mitochondrial membrane potential, lead to an impaired equilibrium between L-MGM1 and S-MGM1, inhibiting mitochondrial fusion. Plays a role in the maintenance and remodeling of mitochondrial cristae, some invaginations of the mitochondrial inner membrane that provide an increase in the surface area. Probably acts by forming helical filaments at the inside of inner membrane tubes with the shape and dimensions of crista junctions. In terms of biological role, constitutes the transmembrane long form (L-MGM1) that plays a central role in mitochondrial inner membrane fusion and cristae morphology. L-MGM1 and the soluble short form (S-MGM1) form higher-order helical assemblies that coordinate the fusion of mitochondrial inner membranes. Inner membrane-anchored L-MGM1 molecules initiate membrane remodeling by recruiting soluble S-MGM1 to rapidly polymerize into a flexible cylindrical scaffold encaging the mitochondrial inner membrane. Once at the membrane surface, the formation of S-MGM1 helices induce bilayer curvature. MGM1 dimerization through the paddle region, which inserts into cardiolipin-containing membrane, promotes GTP hydrolysis and the helical assembly of a flexible MGM1 lattice on the membrane, which drives membrane curvature and mitochondrial fusion. Constitutes the soluble short form (S-MGM1) generated by cleavage by PCP1, which plays a central role in mitochondrial inner membrane fusion and cristae morphology. The transmembrane long form (L-MGM1) and the S-MGM1 form higher-order helical assemblies that coordinate the fusion of mitochondrial inner membranes. Inner membrane-anchored L-MGM1 molecules initiate membrane remodeling by recruiting soluble S-MGM1 to rapidly polymerize into a flexible cylindrical scaffold encaging the mitochondrial inner membrane. Once at the membrane surface, the formation of S-MGM1 helices induce bilayer curvature. MGM1 dimerization through the paddle region, which inserts into cardiolipin-containing membrane, promotes GTP hydrolysis and the helical assembly of a flexible MGM1 lattice on the membrane, which drives membrane curvature and mitochondrial fusion. Excess levels of S-MGM1 produced by cleavage by PCP1 following stress conditions that induce loss of mitochondrial membrane potential, lead to an impaired equilibrium between L-MGM1 and S-MGM1, thereby inhibiting mitochondrial fusion. The protein is Dynamin-like GTPase MGM1, mitochondrial of Saccharomyces cerevisiae (strain ATCC 204508 / S288c) (Baker's yeast).